The sequence spans 449 residues: MRECISVHVGQAGVQIGNACWELFCLEHGIQADGTFGTQASKINDDDSFTTFFSETGNGKHVPRAVMVDLEPTVVDEVRAGTYRQLFHPEQLITGKEDAANNYARGHYTVGKESIDLVLDRIRKLTDACSGLQGFLIFHSFGGGTGSGFTSLLMERLSLDYGKKSKLEFAIYPAPQVSTAVVEPYNSILTTHTTLEHSDCAFMVDNEAIYDICRRNLDIERPTYTNLNRLISQIVSSITASLRFDGALNVDLTEFQTNLVPYPRIHFPLVTYAPIVSAEKAYHEQLSVAEITSSCFEPNSQMVKCDPRHGKYMACCMLYRGDVVPKDVNVAIAAIKTKRTIQFVDWCPTGFKVGINYQPPTVVPGGDLAKVQRAVCMLSNTTAIAEAWARLDHKFDLMYAKRAFVHWYVGEGMEEGEFSEAREDLAALEKDYEEVGTDSFEEENEGEEF.

The MREC motif motif lies at 1–4 (MREC). GTP contacts are provided by glutamine 11, glutamate 71, serine 140, glycine 144, threonine 145, threonine 179, asparagine 206, and asparagine 228. Glutamate 71 is a Mg(2+) binding site. The active site involves glutamate 254.

The protein belongs to the tubulin family. In terms of assembly, dimer of alpha and beta chains. A typical microtubule is a hollow water-filled tube with an outer diameter of 25 nm and an inner diameter of 15 nM. Alpha-beta heterodimers associate head-to-tail to form protofilaments running lengthwise along the microtubule wall with the beta-tubulin subunit facing the microtubule plus end conferring a structural polarity. Microtubules usually have 13 protofilaments but different protofilament numbers can be found in some organisms and specialized cells. It depends on Mg(2+) as a cofactor. Post-translationally, some glutamate residues at the C-terminus are polyglycylated, resulting in polyglycine chains on the gamma-carboxyl group. Glycylation is mainly limited to tubulin incorporated into axonemes (cilia and flagella) whereas glutamylation is prevalent in neuronal cells, centrioles, axonemes, and the mitotic spindle. Both modifications can coexist on the same protein on adjacent residues, and lowering polyglycylation levels increases polyglutamylation, and reciprocally. Cilia and flagella glycylation is required for their stability and maintenance. Flagella glycylation controls sperm motility. Some glutamate residues at the C-terminus are polyglutamylated, resulting in polyglutamate chains on the gamma-carboxyl group. Polyglutamylation plays a key role in microtubule severing by spastin (SPAST). SPAST preferentially recognizes and acts on microtubules decorated with short polyglutamate tails: severing activity by SPAST increases as the number of glutamates per tubulin rises from one to eight, but decreases beyond this glutamylation threshold. Glutamylation is also involved in cilia motility. In terms of processing, the C-terminal phenylalanine residue is cleaved by MATCAP1/KIAA0895L.

It is found in the cytoplasm. The protein localises to the cytoskeleton. It catalyses the reaction GTP + H2O = GDP + phosphate + H(+). In terms of biological role, tubulin is the major constituent of microtubules, a cylinder consisting of laterally associated linear protofilaments composed of alpha- and beta-tubulin heterodimers. Microtubules grow by the addition of GTP-tubulin dimers to the microtubule end, where a stabilizing cap forms. Below the cap, tubulin dimers are in GDP-bound state, owing to GTPase activity of alpha-tubulin. In Rattus norvegicus (Rat), this protein is Tubulin alpha-8 chain (Tuba8).